The sequence spans 338 residues: POU domain, class 4, transcription factor 3 (338 aa).

Positions 56-65 (RAEALAAVDI) match the POU-IV box motif. The interval 91–112 (TSPTVPISHPAALTSHPHHPVH) is disordered. One can recognise a POU-specific domain in the interval 179-256 (DVESDPRELE…VLQAWLEEAE (78 aa)). A DNA-binding region (homeobox) is located at residues 274–333 (RKRKRTSIAAPEKRSLEAYFAIQPRPSSEKIAAIAEKLDLKKNVVRVWFCNQRQKQKRMK).

The protein belongs to the POU transcription factor family. In terms of assembly, interacts with ISL1. Expressed in the chochlea of the inner ear.

It localises to the nucleus. Its subcellular location is the cytoplasm. Its function is as follows. Acts as a transcriptional activator. Acts by binding to sequences related to the consensus octamer motif 5'-ATGCAAAT-3' in the regulatory regions of its target genes. Involved in the auditory system development, required for terminal differentiation of hair cells in the inner ear. This chain is POU domain, class 4, transcription factor 3, found in Rattus norvegicus (Rat).